The primary structure comprises 382 residues: MKAVHFGAGNIGRGFIGLLLNQSGYEVTFVDINDTVIEALEVKRHYEVGFAEDGVDRIVVDRVRGVNSLKEPARVVDLIAEADLVTTAVGPSLLSKVAPLISEGLRAREVEDAPVYVIACENMIGGSAILRQEVEACGGVGEANVFFPNAAVDRIVPLQQHEDPLYVEVETFHEWVIETQGLNEQPPIQGVTWVEEIGPYIERKLFTVNTGHAIASYIGSLFGKATIDEALKDRRVRQVVQGALYETGWLLLEKYGFEAKEHSQYIQKIIKRFENPKLKDEVSRVARSPIRKLGPSDRLVKPARELMDNGIEPNELAYGIAAALHYYNPEDSESSELNLSIEEHGISSTIEKYLHLHEGDTLTQLILDQYHLIREEEKERVS.

Ala-3–Gly-14 contacts NAD(+).

The protein belongs to the mannitol dehydrogenase family.

It carries out the reaction D-mannitol 1-phosphate + NAD(+) = beta-D-fructose 6-phosphate + NADH + H(+). The protein is Mannitol-1-phosphate 5-dehydrogenase of Exiguobacterium sp. (strain ATCC BAA-1283 / AT1b).